A 40-amino-acid chain; its full sequence is Photosystem II reaction center protein J (40 aa).

The chain crosses the membrane as a helical span at residues 8 to 28 (IPLWIIGTVTGLLVIGLIGIF).

The protein belongs to the PsbJ family. PSII is composed of 1 copy each of membrane proteins PsbA, PsbB, PsbC, PsbD, PsbE, PsbF, PsbH, PsbI, PsbJ, PsbK, PsbL, PsbM, PsbT, PsbX, PsbY, PsbZ, Psb30/Ycf12, at least 3 peripheral proteins of the oxygen-evolving complex and a large number of cofactors. It forms dimeric complexes.

Its subcellular location is the plastid. It is found in the chloroplast thylakoid membrane. In terms of biological role, one of the components of the core complex of photosystem II (PSII). PSII is a light-driven water:plastoquinone oxidoreductase that uses light energy to abstract electrons from H(2)O, generating O(2) and a proton gradient subsequently used for ATP formation. It consists of a core antenna complex that captures photons, and an electron transfer chain that converts photonic excitation into a charge separation. This Ipomoea purpurea (Common morning glory) protein is Photosystem II reaction center protein J.